We begin with the raw amino-acid sequence, 97 residues long: UPF0147 protein MA_0092 (97 aa).

This sequence belongs to the UPF0147 family.

This chain is UPF0147 protein MA_0092, found in Methanosarcina acetivorans (strain ATCC 35395 / DSM 2834 / JCM 12185 / C2A).